Here is a 536-residue protein sequence, read N- to C-terminus: MTIAWARRRYGVKLGLGYIATAGLLVGVGVTTNDVPSTIVAGIAGLLTLGSINAAETVASIKEIAAQTERVANGNLEQEVTSTRTDEFGSLADSIEQMRQSLRGRLNEMERTRADLEETQAEAETAREEAEQAKQEAQAAEREARELAATYQDTAKRYGETMEAAATGDLTQRVDVDTDHEAMETVGTAFNQMMDDLQATVRTVTTVADEIEAKTERMSETSADIEASAGDTVEAVSKIESQANDQRTELDSAADDVQQVSASAEEIAATIDDLASRSEDVATASDAARDSSKSALDEMSSIETEVDDAVGQVEQLRDQVAEITDIVDVITDIGEQTNMLALNASIEAARAGGNADGDGFSVVADEVKDLAEETQDRANEIAAVVEKVTAQTEDVTASIQQTRTRVESGSETVESTLRDIRTIADSIAEVSNSIDEIQRTTSEQAETVQSTATSVERVAGLSDDTTALASDAESAVIGQRESAEEIAASLEQFQNTAVEQLQSRVASFTVATEDSETAGGSVEQPVMRAGADGGGA.

At 2-14 (TIAWARRRYGVKL) the chain is on the cytoplasmic side. The helical transmembrane segment at 15 to 29 (GLGYIATAGLLVGVG) threads the bilayer. Residues 30–39 (VTTNDVPSTI) are Extracellular-facing. The chain crosses the membrane as a helical span at residues 40 to 55 (VAGIAGLLTLGSINAA). Positions 55–107 (AETVASIKEIAAQTERVANGNLEQEVTSTRTDEFGSLADSIEQMRQSLRGRLN) constitute an HAMP 1 domain. Residues 56–536 (ETVASIKEIA…MRAGADGGGA (481 aa)) lie on the Cytoplasmic side of the membrane. The tract at residues 116-145 (LEETQAEAETAREEAEQAKQEAQAAEREAR) is disordered. A compositionally biased stretch (basic and acidic residues) spans 124 to 145 (ETAREEAEQAKQEAQAAEREAR). The HAMP 2 domain occupies 149–202 (ATYQDTAKRYGETMEAAATGDLTQRVDVDTDHEAMETVGTAFNQMMDDLQATVR). The region spanning 221 to 459 (TSADIEASAG…STATSVERVA (239 aa)) is the Methyl-accepting transducer domain. Residue E266 is modified to Glutamate methyl ester (Glu). The interval 278-307 (SEDVATASDAARDSSKSALDEMSSIETEVD) is disordered. Residues 287 to 296 (AARDSSKSAL) are compositionally biased toward basic and acidic residues. Position 473 is a glutamate methyl ester (Glu) (E473). The disordered stretch occupies residues 512–536 (TEDSETAGGSVEQPVMRAGADGGGA).

Belongs to the methyl-accepting chemotaxis (MCP) protein family. Methylated by CheR.

It localises to the cell membrane. Its function is as follows. Transduces signals from the phototaxis receptor sensory rhodopsin I (SR-I) to the flagellar motor. Responds to light changes through the variation of the level of methylation. This chain is Sensory rhodopsin I transducer (htr1), found in Halobacterium salinarum (strain ATCC 29341 / DSM 671 / R1).